The chain runs to 356 residues: Putative mitogen-activated protein kinase 14C (356 aa).

Residues Y20–L305 enclose the Protein kinase domain. Residues L26–V34 and K49 contribute to the ATP site. The active-site Proton acceptor is the D147. Phosphothreonine is present on T177.

The protein belongs to the protein kinase superfamily. CMGC Ser/Thr protein kinase family. MAP kinase subfamily. The cofactor is Mg(2+). In terms of processing, the phosphorylation on Thr-177 activates the enzyme. A conserved Tyr, which must also be phosphorylated to activate the enzyme in closely related sequences, is replaced by His-179 in this sequence.

The enzyme catalyses L-seryl-[protein] + ATP = O-phospho-L-seryl-[protein] + ADP + H(+). It catalyses the reaction L-threonyl-[protein] + ATP = O-phospho-L-threonyl-[protein] + ADP + H(+). In terms of biological role, kinase involved in a signal transduction pathway. The polypeptide is Putative mitogen-activated protein kinase 14C (p38c) (Drosophila melanogaster (Fruit fly)).